The chain runs to 223 residues: Sugar fermentation stimulation protein homolog (223 aa).

The protein belongs to the SfsA family.

In Thermosipho melanesiensis (strain DSM 12029 / CIP 104789 / BI429), this protein is Sugar fermentation stimulation protein homolog.